A 1089-amino-acid polypeptide reads, in one-letter code: WD repeat-containing protein on Y chromosome (1089 aa).

WD repeat units lie at residues 155-199 (EEVA…IRTA), 207-249 (PHAV…RGPF), 329-368 (RIPLGVTTFFVAESHNIVVTGGPDTFVRIWDVYIPTEPSA), 372-411 (GHNGGIVMVFVQPEENKVYSVDYQKIIKVWNLQEHTLLQT), 462-501 (THAAPVSVVLYNRLFRNIVTCGLDSYIIVWDPWTGRRKII), 514-553 (TIDIEITAACFDPLEQFLLTGARDGSLKIWNYNNAVVIRN), and 601-641 (FHTD…RRYS). The segment at 661–684 (KRSKRWASRAPHSGSHMMSHTGSH) is disordered. Low complexity predominate over residues 672–684 (HSGSHMMSHTGSH). 2 WD repeats span residues 767–806 (KTGDCVLTMATDRKNRFLFTGTAFGYIKVWYIVNYCIPEA) and 850–889 (GHLKAINSISFINLPKIIITGSHDYSCRLWTQGGRYLGTL). The disordered stretch occupies residues 1049-1089 (LNIKLPSRRRSDRTNDPRNMRTAKTRGDMGLGHRSSHTSQN).

The sequence is that of WD repeat-containing protein on Y chromosome from Drosophila willistoni (Fruit fly).